A 585-amino-acid polypeptide reads, in one-letter code: Poly(A) RNA polymerase, mitochondrial (585 aa).

Residues 1–37 (MAARGVGLLTRLPVCSQRRNRIPRSISRLLSCPGTIA) constitute a mitochondrion transit peptide. Position 90 is an N6-acetyllysine (lysine 90). ATP-binding positions include 107 to 109 (YES) and 244 to 245 (GC). Mg(2+)-binding residues include aspartate 246 and aspartate 248. Residues 441 to 486 (ELLIKEFFEYFGNFAFNKNSINIRQGREQNKPDSSPLYIQNPFETS) form the PAP-associated domain. The tract at residues 537–585 (PGSGHTSLSRKKKKKPMSEKVKGLLASIKSNSPDSSTDTSGKRTISTQA) is disordered. Over residues 564 to 585 (IKSNSPDSSTDTSGKRTISTQA) the composition is skewed to polar residues.

It belongs to the DNA polymerase type-B-like family. In terms of assembly, homodimer. Mg(2+) is required as a cofactor. Requires Mn(2+) as cofactor.

It localises to the cytoplasm. The protein resides in the mitochondrion. The enzyme catalyses RNA(n) + ATP = RNA(n)-3'-adenine ribonucleotide + diphosphate. In terms of biological role, polymerase that creates the 3' poly(A) tail of mitochondrial transcripts. Can use all four nucleotides, but has higher activity with ATP and UTP (in vitro). Plays a role in replication-dependent histone mRNA degradation. May be involved in the terminal uridylation of mature histone mRNAs before their degradation is initiated. Might be responsible for the creation of some UAA stop codons which are not encoded in mtDNA. This chain is Poly(A) RNA polymerase, mitochondrial (Mtpap), found in Mus musculus (Mouse).